The sequence spans 514 residues: Beta-secretase 2 (514 aa).

The signal sequence occupies residues Met1–Ala20. The propeptide occupies Val21–Leu62. Residues Val21–Tyr469 lie on the Extracellular side of the membrane. Residues Tyr88–Ala425 enclose the Peptidase A1 domain. Residue Asp106 is part of the active site. An N-linked (GlcNAc...) asparagine glycan is attached at Asn166. 3 disulfides stabilise this stretch: Cys229–Cys429, Cys288–Cys453, and Cys340–Cys389. The active site involves Asp299. Residue Asn362 is glycosylated (N-linked (GlcNAc...) asparagine). The helical transmembrane segment at Ala470–Leu490 threads the bilayer. The Cytoplasmic segment spans residues His491–Lys514.

The protein belongs to the peptidase A1 family. As to quaternary structure, monomer. Interacts with RTN3 and RTN4. Undergoes autoproteolytic cleavage. Post-translationally, glycosylated.

The protein localises to the cell membrane. It is found in the golgi apparatus. The protein resides in the endoplasmic reticulum. It localises to the endosome. Its subcellular location is the melanosome. It carries out the reaction Broad endopeptidase specificity. Cleaves Glu-Val-Asn-Leu-|-Asp-Ala-Glu-Phe in the Swedish variant of Alzheimer's amyloid precursor protein.. Functionally, responsible for the proteolytic processing of the amyloid precursor protein (APP). Cleaves APP, between residues 690 and 691, leading to the generation and extracellular release of beta-cleaved soluble APP, and a corresponding cell-associated C-terminal fragment which is later released by gamma-secretase. It has also been shown that it can cleave APP between residues 671 and 672. Involved in the proteolytic shedding of PMEL at early stages of melanosome biogenesis. Cleaves PMEL within the M-beta fragment to release the amyloidogenic PMEL luminal fragment containing M-alpha and a small portion of M-beta N-terminus. This is a prerequisite step for subsequent processing and assembly of PMEL fibrils into amyloid sheets. Responsible also for the proteolytic processing of CLTRN in pancreatic beta cells. The polypeptide is Beta-secretase 2 (Bace2) (Rattus norvegicus (Rat)).